Consider the following 2192-residue polypeptide: BEACH domain-containing protein lvsE (2192 aa).

Disordered regions lie at residues 948 to 969, 996 to 1065, 1160 to 1303, and 1343 to 1363; these read STSL…TSTG, TTTT…DEPE, NESQ…NNLS, and DENG…SSSN. Residues 996–1049 are compositionally biased toward low complexity; the sequence is TTTTTTTTTTTTTTSTTSNTGNDSPLSIESPISSPVLIENTTNTTNTTTTNTTN. Positions 1171 to 1187 are enriched in polar residues; it reads NIDNLNPNTGLPYNKST. Over residues 1188–1231 the composition is skewed to low complexity; it reads NNLSNVNNVNNNNNNNSNNINVSGNNTIGPSSSKSPLRNSRSMS. Residues 1232-1243 are compositionally biased toward polar residues; sequence IGSSATKSPSRQ. Low complexity-rich tracts occupy residues 1253–1303 and 1350–1363; these read NNNS…NNLS and SSPN…SSSN. Positions 1366 to 1491 constitute a BEACH-type PH domain; that stretch reads IEEEKFIGSW…ESIQIFNKIV (126 aa). Residues 1504–1795 form the BEACH domain; the sequence is DHPSKIIKKS…QLFSKPHPIR (292 aa). Over residues 1823-1849 the composition is skewed to low complexity; the sequence is GTINSSFSSTSTSTSTSSPPPSTLNSP. The tract at residues 1823–1851 is disordered; it reads GTINSSFSSTSTSTSTSSPPPSTLNSPQG. 3 WD repeats span residues 1973–2012, 2022–2061, and 2156–2192; these read FHHD…IKDS, SHDE…YQRS, and DSPA…VKDL.

In Dictyostelium discoideum (Social amoeba), this protein is BEACH domain-containing protein lvsE (lvsE).